The following is an 84-amino-acid chain: UPF0729 protein F18A11.3 (84 aa).

The chain crosses the membrane as a helical span at residues 1–21 (MVCLPCIFLPIMMAIYMKFIM).

The protein belongs to the UPF0729 family.

The protein localises to the cell membrane. The protein is UPF0729 protein F18A11.3 of Caenorhabditis elegans.